The sequence spans 233 residues: ATP synthase subunit a, chloroplastic (233 aa).

A run of 4 helical transmembrane segments spans residues 82–102 (VPFIGTLFLFIFVSNWSGALI), 121–141 (INTTAALALLTSLAYFYAGIS), 177–199 (LFGNILADELVVSVLTLLVPLIV), and 211–231 (SSIQALIFATLAAAYIGEAIE).

The protein belongs to the ATPase A chain family. As to quaternary structure, F-type ATPases have 2 components, CF(1) - the catalytic core - and CF(0) - the membrane proton channel. CF(1) has five subunits: alpha(3), beta(3), gamma(1), delta(1), epsilon(1). CF(0) has four main subunits: a, b, b' and c.

The protein resides in the plastid. It is found in the chloroplast thylakoid membrane. Key component of the proton channel; it plays a direct role in the translocation of protons across the membrane. This chain is ATP synthase subunit a, chloroplastic, found in Galdieria sulphuraria (Red alga).